A 472-amino-acid polypeptide reads, in one-letter code: MLKVDSKLDYKVADISLADWGNKEMQLSEREMPGLMSIREKYGKEKPLKGLKVMGSLHMTIQTAMLIETLHALGADIRWASCNIFSTQDHAAAAIAANGTAKVFAWKGETLEEYWWCTEQALTWPDGSGPDLIVDDGGDATLLIHHGVKAEKDASILDEKTDNKEFQCVLDRLKLSVAETPGKWTAIAEKVRGVSEETTTGVHRLYQMQEAGELLFPAINVNDSVTKSKFDNLYGCRESLADGIKRATDVMIAGKVVVVVGYGDVGKGCAQSMRGFGARVLVTEIDPICALQAAMEGFEVCTMANAVERGDVFVTCTGNYHVITGEHISKMKDEAIICNIGHFDNEIEMGYLENSKTAKKIEIKPQVDKWVMESGKSVIVLAEGRLVNLGCATGHPSFVMSNSFTNQALAQIDLAKNEYEPKVMILSKKLDEEVARLHLERLGVELDVLSKEQADYISVDVEGPYKPDHYRY.

Residues T60, D136, and E197 each coordinate substrate. An NAD(+)-binding site is contributed by 198 to 200 (TTT). Positions 227 and 231 each coordinate substrate. NAD(+) contacts are provided by residues N232, 261 to 266 (GYGDVG), E284, N319, 340 to 342 (IGH), and N388.

The protein belongs to the adenosylhomocysteinase family. The cofactor is NAD(+).

The protein localises to the cytoplasm. The catalysed reaction is S-adenosyl-L-homocysteine + H2O = L-homocysteine + adenosine. It functions in the pathway amino-acid biosynthesis; L-homocysteine biosynthesis; L-homocysteine from S-adenosyl-L-homocysteine: step 1/1. In terms of biological role, may play a key role in the regulation of the intracellular concentration of adenosylhomocysteine. The sequence is that of Adenosylhomocysteinase from Maridesulfovibrio salexigens (strain ATCC 14822 / DSM 2638 / NCIMB 8403 / VKM B-1763) (Desulfovibrio salexigens).